Reading from the N-terminus, the 503-residue chain is Hexose transporter 1 (503 aa).

At 1-26 (MKKSSKEISPSQSLKNGGSDHFFNTS) the chain is on the cytoplasmic side. Residues 27 to 47 (LMYVLAACLASFIFGYQVSVL) form a helical membrane-spanning segment. The Extracellular portion of the chain corresponds to 48–76 (NTIKNFIVIEFGWCTGNKVECDDSTLKSS). Cys61 and Cys68 are oxidised to a cystine. A helical membrane pass occupies residues 77-97 (FLLASVFIGAVVGSGFSDYLV). Over 98-102 (QHGRR) the chain is Cytoplasmic. Residues 103-123 (FSLLVIYNFFILVSILTSITH) traverse the membrane as a helical segment. At 124-132 (HFHTILFSR) the chain is on the extracellular side. A helical membrane pass occupies residues 133 to 153 (LLSGFGVGLITVSVPMYISEM). The Cytoplasmic segment spans residues 154-163 (THKDKKGAYG). A helical transmembrane segment spans residues 164–184 (VLHQLFITFGILVAVLLGMAM). Gln167 is an alpha-D-glucose binding site. Beta-D-glucose is bound at residue Gln167. At 185 to 205 (GEAPDAKSVDALGEFQKIWWR) the chain is on the extracellular side. Residues 206-226 (LMFFFPCLISILGIVLLTFFY) form a helical membrane-spanning segment. Residues 227-291 (KEETPYYLFE…RAMQIPSYRN (65 aa)) are Cytoplasmic-facing. Residues 292-312 (VILLGCILSGLQQFTGINVLV) form a helical membrane-spanning segment. Alpha-D-glucose contacts are provided by Gln303, Gln304, and Asn309. Residue Gln303 participates in beta-D-glucose binding. Asn309 provides a ligand contact to beta-D-glucose. At 313–329 (SNSNELYKEFLSNKLIT) the chain is on the extracellular side. The chain crosses the membrane as a helical span at residues 330–350 (TLSVIMTVVNFLMTFPAIYIV). Asn339 is a binding site for beta-D-glucose. Topologically, residues 351–356 (EKLGRK) are cytoplasmic. Residues 357-377 (TLLLCGCAGVTLAAFLPTAIA) traverse the membrane as a helical segment. Topologically, residues 378–391 (NQIDRSSDLVRNLS) are extracellular. The helical transmembrane segment at 392–412 (IAATFVMIISFAVSYGPVLWI) threads the bilayer. Trp411 provides a ligand contact to alpha-D-glucose. Topologically, residues 413–428 (YLHEMFPSEIKDSAAS) are cytoplasmic. A helical transmembrane segment spans residues 429–449 (LASLVNWVCAIIVVFPSDIII). Residues 450–454 (KKSPT) are Extracellular-facing. A helical membrane pass occupies residues 455 to 475 (ILFFIFSGMSILSFLFIFFFI). The Cytoplasmic segment spans residues 476-503 (KETKGGEIGTSPYITMEERQKHMGKSAV).

The protein belongs to the major facilitator superfamily. Sugar transporter (TC 2.A.1.1) family. Homodimer.

It is found in the cell membrane. The catalysed reaction is D-glucose(out) = D-glucose(in). It carries out the reaction D-fructose(out) = D-fructose(in). The enzyme catalyses D-galactose(in) = D-galactose(out). It catalyses the reaction D-mannose(out) = D-mannose(in). The catalysed reaction is D-glucosamine(out) = D-glucosamine(in). It carries out the reaction D-xylose(out) = D-xylose(in). Inhibited by compound 3361 (3-O-((undec-10-en)-1-yl)-D-glucose). Functionally, sodium-independent facilitative hexose transporter. Can transport D-glucose and D-fructose. Can transport D-mannose, D-galactose, D-xylose and D-glucosamine. In Plasmodium vivax, this protein is Hexose transporter 1.